A 203-amino-acid polypeptide reads, in one-letter code: Guanylate kinase (203 aa).

The 180-residue stretch at 4-183 folds into the Guanylate kinase-like domain; the sequence is GKLFVISAPS…ASTLLKSIIW (180 aa). 11–18 contributes to the ATP binding site; sequence APSGAGKT.

This sequence belongs to the guanylate kinase family.

Its subcellular location is the cytoplasm. The catalysed reaction is GMP + ATP = GDP + ADP. Essential for recycling GMP and indirectly, cGMP. In Desulfotalea psychrophila (strain LSv54 / DSM 12343), this protein is Guanylate kinase.